A 937-amino-acid chain; its full sequence is AP-2 complex subunit beta (937 aa).

Thr2 is modified (N-acetylthreonine). Ser4 carries the phosphoserine modification. Lys265 is modified (N6-acetyllysine). At Tyr737 the chain carries Phosphotyrosine; by SRC. The tract at residues 841 to 937 is interaction with ARRB1; it reads WKDIPNENEL…YQVYDSILKN (97 aa). Tyr928 is subject to Phosphotyrosine.

It belongs to the adaptor complexes large subunit family. As to quaternary structure, adaptor protein complex 2 (AP-2) is a heterotetramer composed of two large adaptins (alpha-type subunit AP2A1 or AP2A2 and beta-type subunit AP2B1), a medium adaptin (mu-type subunit AP2M1) and a small adaptin (sigma-type subunit AP2S1). Interacts with EPN1. Interacts with EPS15; clathrin competes with EPS15. Interacts with SNAP91; clathrin competes with SNAP91. Interacts with CLTC; clathrin competes with EPS15, SNAP91 and PIP5K1C. Interacts with LDLRAP1. Interacts with AMPH and BIN1. Interacts with ARF6 (GDP-bound). Interacts (dephosphorylated at Tyr-737) with ARRB1; phosphorylation of AP2B1 at Tyr-737 disrupts the interaction. Interacts with SLC2A8. Interacts with SCYL1 and SCYL2. Interacts with TGFBR1 and TGFBR2. Interacts with PIP5K1C; clathrin competes with PIP5K1C. Interacts with DENND1B, but not with DENND1A, nor DENND1C. Interacts with FCHO1. Interacts with RFTN1. Interacts with KIAA1107. Together with AP2A1 or AP2A2 and AP2M1, it interacts with ADAM10; this interaction facilitates ADAM10 endocytosis from the plasma membrane during long-term potentiation in hippocampal neurons. Phosphorylation at Tyr-737 by SRC occurs at the plasma membrane in clathrin-coated vesicles (CCVs). Expressed in the brain (at protein level).

The protein resides in the cell membrane. It is found in the membrane. It localises to the coated pit. In terms of biological role, component of the adaptor protein complex 2 (AP-2). Adaptor protein complexes function in protein transport via transport vesicles in different membrane traffic pathways. Adaptor protein complexes are vesicle coat components and appear to be involved in cargo selection and vesicle formation. AP-2 is involved in clathrin-dependent endocytosis in which cargo proteins are incorporated into vesicles surrounded by clathrin (clathrin-coated vesicles, CCVs) which are destined for fusion with the early endosome. The clathrin lattice serves as a mechanical scaffold but is itself unable to bind directly to membrane components. Clathrin-associated adaptor protein (AP) complexes which can bind directly to both the clathrin lattice and to the lipid and protein components of membranes are considered to be the major clathrin adaptors contributing the CCV formation. AP-2 also serves as a cargo receptor to selectively sort the membrane proteins involved in receptor-mediated endocytosis. AP-2 seems to play a role in the recycling of synaptic vesicle membranes from the presynaptic surface. AP-2 recognizes Y-X-X-[FILMV] (Y-X-X-Phi) and [ED]-X-X-X-L-[LI] endocytosis signal motifs within the cytosolic tails of transmembrane cargo molecules. AP-2 may also play a role in maintaining normal post-endocytic trafficking through the ARF6-regulated, non-clathrin pathway. During long-term potentiation in hippocampal neurons, AP-2 is responsible for the endocytosis of ADAM10. The AP-2 beta subunit acts via its C-terminal appendage domain as a scaffolding platform for endocytic accessory proteins; at least some clathrin-associated sorting proteins (CLASPs) are recognized by their [DE]-X(1,2)-F-X-X-[FL]-X-X-X-R motif. The AP-2 beta subunit binds to clathrin heavy chain, promoting clathrin lattice assembly; clathrin displaces at least some CLASPs from AP2B1 which probably then can be positioned for further coat assembly. The chain is AP-2 complex subunit beta (AP2B1) from Homo sapiens (Human).